We begin with the raw amino-acid sequence, 290 residues long: MLPDSSVRLNKYISESGICSRREADRYIEQGNVFLNGKRATIGDQVKPGDVVKVNGQLIEPRESEDLVLIALNKPVGIVSTTEDGERDNIVDFVNHSKRVFPIGRLDKDSQGLIFLTNHGDLVNKILRAGNDHEKEYLVTVDKPITDEFIRGMGAGVPILGTVTKKCKVKKEAPFVFRITLVQGLNRQIRRMCEHFGYEVKKLERTRIMNVSLSGIPLGEWRDLTDDELIDLFKLIENSSSEAKPKAKAKPKTVGIKRPVVKMEKTAEKGGRPASNGKRFTSPGRKKKGR.

One can recognise an S4 RNA-binding domain in the interval 7–74; the sequence is VRLNKYISES…EDLVLIALNK (68 aa). Interaction with RNA stretches follow at residues 105 to 108 and 187 to 190; these read RLDK and RQIR. The active-site Nucleophile is the aspartate 107. The segment at 241-290 is disordered; it reads SEAKPKAKAKPKTVGIKRPVVKMEKTAEKGGRPASNGKRFTSPGRKKKGR. Positions 261–271 are enriched in basic and acidic residues; that stretch reads VKMEKTAEKGG.

The protein belongs to the pseudouridine synthase RsuA family. Monomer.

It catalyses the reaction uridine(2604) in 23S rRNA = pseudouridine(2604) in 23S rRNA. The catalysed reaction is uridine(35) in tRNA(Tyr) = pseudouridine(35) in tRNA(Tyr). In terms of biological role, dual specificity enzyme that catalyzes the synthesis of pseudouridine from uracil-2604 in 23S ribosomal RNA and from uracil-35 in the anticodon of tRNA(Tyr). In Escherichia coli O6:H1 (strain CFT073 / ATCC 700928 / UPEC), this protein is Dual-specificity RNA pseudouridine synthase RluF (rluF).